We begin with the raw amino-acid sequence, 676 residues long: Protein cereblon (676 aa).

Positions 1–11 (MDDEETAEIDE) are enriched in acidic residues. Disordered stretches follow at residues 1–78 (MDDE…TTAH), 118–194 (EDAG…AVPR), and 249–276 (DDANNADVINTVPDDTSEASPPPPLDVD). Low complexity-rich tracts occupy residues 12-33 (TSSSSTNTNTNATAMATATETA) and 125-139 (VPQNPTVATNTTPPA). A compositionally biased stretch (polar residues) spans 156-177 (LVNNDSPSQASISSRHSGSDMS). Positions 314–542 (RMLIFMHQHI…IIGTTLKHES (229 aa)) constitute a Lon N-terminal domain. The region spanning 541-650 (ESLFYCRYCN…LAGSSVRIGK (110 aa)) is the CULT domain. Zn(2+)-binding residues include Cys-546, Cys-549, Cys-615, and Cys-618.

This sequence belongs to the CRBN family. Likely a component of a DCX (DDB1-CUL4-X-box) protein ligase complex. May interact with pic/DDB1. In terms of processing, ubiquitinated.

It localises to the nucleus. Its pathway is protein modification; protein ubiquitination. In terms of biological role, substrate recognition component of a DCX (DDB1-CUL4-X-box) E3 protein ligase complex that mediates the ubiquitination and subsequent proteasomal degradation of target proteins. Has an essential role in mediating growth by negatively regulating insulin signaling. It also has a role in maintaining presynaptic function in the neuromuscular junction synapses of third-instar larvae. In Drosophila mojavensis (Fruit fly), this protein is Protein cereblon.